A 41-amino-acid polypeptide reads, in one-letter code: Alpha-conotoxin TxIB (41 aa).

Positions 1–20 are excised as a propeptide; sequence FDGRNTSANNKATDLMALPV. 2 disulfides stabilise this stretch: Cys-23/Cys-29 and Cys-24/Cys-37. Positions 25–27 are ser-Xaa-Pro motif, crucial for potent interaction with nAChR; the sequence is SDP. At Cys-37 the chain carries Cysteine amide; in Alpha-conotoxin TxIB. A propeptide spanning residues 39-41 is cleaved from the precursor; it reads GRR.

Belongs to the conotoxin A superfamily. In terms of tissue distribution, expressed by the venom duct.

The protein localises to the secreted. Alpha-conotoxins act on postsynaptic membranes, they bind to the nicotinic acetylcholine receptors (nAChR) and thus inhibit them. This conotoxin is a subtype-specific blocker of alpha-6/alpha-3-beta-2-beta-3 (CHRNA6/CHRNA3-CHRNB2-CHRNB3) nAChRs nicotinic acetylcholine receptors (nAChRs) (IC(50)=28.4 nM). This is Alpha-conotoxin TxIB from Conus textile (Cloth-of-gold cone).